A 335-amino-acid chain; its full sequence is DNA-directed RNA polymerase subunit alpha (335 aa).

The tract at residues 1–233 (MTAVNDFLTP…QQIAVFVDLE (233 aa)) is alpha N-terminal domain (alpha-NTD). Positions 247–335 (IDPILLRPVD…DDDRLNAKLR (89 aa)) are alpha C-terminal domain (alpha-CTD).

It belongs to the RNA polymerase alpha chain family. As to quaternary structure, homodimer. The RNAP catalytic core consists of 2 alpha, 1 beta, 1 beta' and 1 omega subunit. When a sigma factor is associated with the core the holoenzyme is formed, which can initiate transcription.

The catalysed reaction is RNA(n) + a ribonucleoside 5'-triphosphate = RNA(n+1) + diphosphate. Functionally, DNA-dependent RNA polymerase catalyzes the transcription of DNA into RNA using the four ribonucleoside triphosphates as substrates. The chain is DNA-directed RNA polymerase subunit alpha from Alcanivorax borkumensis (strain ATCC 700651 / DSM 11573 / NCIMB 13689 / SK2).